We begin with the raw amino-acid sequence, 369 residues long: GTPase Obg (369 aa).

An Obg domain is found at 1 to 159 (MKFVDEVTID…KNLKLELRVL (159 aa)). Residues 160–334 (ADVGLLGMPN…LIHAIYSHVA (175 aa)) enclose the OBG-type G domain. GTP is bound by residues 166 to 173 (GMPNAGKS), 191 to 195 (FTTLH), 213 to 216 (DIPG), 284 to 287 (NKLD), and 315 to 317 (SAL). Ser173 and Thr193 together coordinate Mg(2+). Positions 339-369 (QPEEVPDPRFTTNEDLSEAAPAPDRDDPRFR) are disordered.

Belongs to the TRAFAC class OBG-HflX-like GTPase superfamily. OBG GTPase family. As to quaternary structure, monomer. Mg(2+) is required as a cofactor.

The protein localises to the cytoplasm. Functionally, an essential GTPase which binds GTP, GDP and possibly (p)ppGpp with moderate affinity, with high nucleotide exchange rates and a fairly low GTP hydrolysis rate. Plays a role in control of the cell cycle, stress response, ribosome biogenesis and in those bacteria that undergo differentiation, in morphogenesis control. This chain is GTPase Obg, found in Leptothrix cholodnii (strain ATCC 51168 / LMG 8142 / SP-6) (Leptothrix discophora (strain SP-6)).